We begin with the raw amino-acid sequence, 310 residues long: Methionyl-tRNA formyltransferase (310 aa).

Position 106–109 (106–109) interacts with (6S)-5,6,7,8-tetrahydrofolate; sequence SLLP.

The protein belongs to the Fmt family.

It catalyses the reaction L-methionyl-tRNA(fMet) + (6R)-10-formyltetrahydrofolate = N-formyl-L-methionyl-tRNA(fMet) + (6S)-5,6,7,8-tetrahydrofolate + H(+). Functionally, attaches a formyl group to the free amino group of methionyl-tRNA(fMet). The formyl group appears to play a dual role in the initiator identity of N-formylmethionyl-tRNA by promoting its recognition by IF2 and preventing the misappropriation of this tRNA by the elongation apparatus. The protein is Methionyl-tRNA formyltransferase of Fervidobacterium nodosum (strain ATCC 35602 / DSM 5306 / Rt17-B1).